Reading from the N-terminus, the 332-residue chain is Casein kinase I isoform 2 (332 aa).

Residues 11-282 enclose the Protein kinase domain; that stretch reads FRIGQKIGSG…YLKRLFRELF (272 aa). Residues 17–25 and Lys40 contribute to the ATP site; that span reads IGSGSFGEI. Asp133 functions as the Proton acceptor in the catalytic mechanism. Residues 306 to 332 are disordered; the sequence is EGRADQQQQQQQQQQRRGSEKEDEHPV. Low complexity predominate over residues 311–320; sequence QQQQQQQQQQ. Over residues 322–332 the composition is skewed to basic and acidic residues; that stretch reads RGSEKEDEHPV.

The protein belongs to the protein kinase superfamily. Ser/Thr protein kinase family. It depends on Mg(2+) as a cofactor.

It carries out the reaction L-seryl-[protein] + ATP = O-phospho-L-seryl-[protein] + ADP + H(+). The enzyme catalyses L-threonyl-[protein] + ATP = O-phospho-L-threonyl-[protein] + ADP + H(+). Functionally, serine/threonine protein kinase. May phosphorylate ZC3H11 during unstressed conditions, leading to proteasome-dependent degradation of ZC3H11. In Trypanosoma brucei brucei, this protein is Casein kinase I isoform 2.